The sequence spans 208 residues: Truncated thymidylate kinase (208 aa).

The protein belongs to the thymidylate kinase family.

Catalyzes the conversion of dTMP to dTDP. This Ornithodoros (relapsing fever ticks) protein is Truncated thymidylate kinase (TMK).